The following is a 257-amino-acid chain: uncharacterized protein (257 aa).

This is an uncharacterized protein from Acidianus bottle-shaped virus (isolate Italy/Pozzuoli) (ABV).